We begin with the raw amino-acid sequence, 255 residues long: MEIIPAIDLLDSVCVRLHQGDYEKVTRFSEDPVDQALSWQKQGATRLHLVDLDGAKSGEPVNDSCVRAITSALNIPVQLGGGVRTLERAEELLAYGLEQVILGTVAIEQPQLVKQLAQRNPGRIIVGIDAKNGKVATRGWISQSEVNATDLASDFNAAGIAAIISTDIATDGTLEGPNLESLRAMANASSVPVIASGGVGCMADLLSLLALEPYGVSGVIVGRALYDGKVDLKEAIRAIGDGRLQDPPTSKPLMA.

Catalysis depends on aspartate 8, which acts as the Proton acceptor. Residue aspartate 129 is the Proton donor of the active site.

Belongs to the HisA/HisF family.

The protein localises to the cytoplasm. It carries out the reaction 1-(5-phospho-beta-D-ribosyl)-5-[(5-phospho-beta-D-ribosylamino)methylideneamino]imidazole-4-carboxamide = 5-[(5-phospho-1-deoxy-D-ribulos-1-ylimino)methylamino]-1-(5-phospho-beta-D-ribosyl)imidazole-4-carboxamide. It participates in amino-acid biosynthesis; L-histidine biosynthesis; L-histidine from 5-phospho-alpha-D-ribose 1-diphosphate: step 4/9. This Prochlorococcus marinus (strain MIT 9313) protein is 1-(5-phosphoribosyl)-5-[(5-phosphoribosylamino)methylideneamino] imidazole-4-carboxamide isomerase.